The following is a 445-amino-acid chain: Phosphoglucosamine mutase (445 aa).

The active-site Phosphoserine intermediate is Ser-102. Ser-102, Asp-241, Asp-243, and Asp-245 together coordinate Mg(2+). Phosphoserine is present on Ser-102.

The protein belongs to the phosphohexose mutase family. Requires Mg(2+) as cofactor. In terms of processing, activated by phosphorylation.

It catalyses the reaction alpha-D-glucosamine 1-phosphate = D-glucosamine 6-phosphate. Functionally, catalyzes the conversion of glucosamine-6-phosphate to glucosamine-1-phosphate. This Sodalis glossinidius (strain morsitans) protein is Phosphoglucosamine mutase.